We begin with the raw amino-acid sequence, 663 residues long: Innate immunity activator protein (663 aa).

Positions 1–68 are disordered; it reads MLQMPKLNEI…RLPTQPGPGW (68 aa). The segment covering 40–50 has biased composition (low complexity); it reads RAQGQAGGARA. A coiled-coil region spans residues 118–147; that stretch reads AVHKQQRALEARLEACLEELRRLCLREAEL. The short motif at 164 to 170 is the Nuclear localization signal (NLS) 1 element; that stretch reads PKVRRRI. Disordered stretches follow at residues 242 to 362, 378 to 425, and 444 to 493; these read RRRN…ASSL, VPGQ…PRRR, and PLPH…RHRG. Positions 259–272 are enriched in low complexity; that stretch reads ELSASDDSSLSDGL. A compositionally biased stretch (pro residues) spans 282–298; it reads PKPPPESPAPPSRPLPP. Residues 327–340 are compositionally biased toward basic and acidic residues; sequence TSLDHPYEKPRKSS. The Nuclear localization signal (NLS) 2 signature appears at 332 to 338; sequence PYEKPRK. The segment covering 350–361 has biased composition (polar residues); sequence ATTPQDGPSASS. The Nuclear localization signal (NLS) 3 signature appears at 422–428; that stretch reads PRRRPTH. Over residues 455-475 the composition is skewed to low complexity; sequence EDSGSDVSSISHPTSPGSSSP.

In terms of assembly, interacts with IRAK1, NOD2 and RIPK2; the interaction takes place upon PRR stimulation. Interacts with YWHAQ/14-3-3T; the interaction increases upon PRR stimulation and is required for cellular signaling pathway activation and cytokine secretion. Interacts (via N-terminal domain) with CYTH1 and CYTH2 (via their N-terminal domains). Interacts with FBXW11 and BTRC; associates with SCF E3 ubiquitin-protein ligase complexes. As to expression, highly expressed in intestinal myeloid-derived cells and expressed in monocyte-derived macrophages upon induction by PRR activation.

The protein resides in the nucleus. Its subcellular location is the cytoplasm. Its function is as follows. Expressed in peripheral macrophages and intestinal myeloid-derived cells, is required for optimal PRR (pattern recognition receptor)-induced signaling, cytokine secretion, and bacterial clearance. Upon stimulation of a broad range of PRRs (pattern recognition receptor) such as NOD2 or TLR2, TLR3, TLR4, TLR5, TLR7 and TLR9, associates with YWHAQ/14-3-3T, which in turn leads to the recruitment and activation of MAP kinases and NF-kappa-B signaling complexes that amplifies PRR-induced downstream signals and cytokine secretion. In the intestine, regulates adherens junction stability by regulating the degradation of CYTH1 and CYTH2, probably acting as substrate cofactor for SCF E3 ubiquitin-protein ligase complexes. Stabilizes adherens junctions by limiting CYTH1-dependent ARF6 activation. The sequence is that of Innate immunity activator protein from Homo sapiens (Human).